The primary structure comprises 131 residues: C-type natriuretic peptide 2 (131 aa).

Positions 1 to 22 are cleaved as a signal peptide; that stretch reads MLYPALLCAALLLIAPLGHTEG. Residues 23-109 constitute a propeptide that is removed on maturation; it reads RTLYPSPDAI…KRAVTDRSRR (87 aa). Residues Cys-115 and Cys-131 are joined by a disulfide bond.

It belongs to the natriuretic peptide family. Expressed in brain and to a low extent in atrium.

The protein localises to the secreted. Functionally, exhibits natriuretic and vasodepressor activity. Has a cGMP-stimulating activity. This is C-type natriuretic peptide 2 from Oncorhynchus mykiss (Rainbow trout).